Consider the following 323-residue polypeptide: tRNA U34 carboxymethyltransferase (323 aa).

Carboxy-S-adenosyl-L-methionine contacts are provided by residues Lys91, Trp105, Lys110, Gly130, 152–154, 181–182, Met196, Tyr200, and Arg315; these read DPT and IE.

This sequence belongs to the class I-like SAM-binding methyltransferase superfamily. CmoB family. In terms of assembly, homotetramer.

The catalysed reaction is carboxy-S-adenosyl-L-methionine + 5-hydroxyuridine(34) in tRNA = 5-carboxymethoxyuridine(34) in tRNA + S-adenosyl-L-homocysteine + H(+). In terms of biological role, catalyzes carboxymethyl transfer from carboxy-S-adenosyl-L-methionine (Cx-SAM) to 5-hydroxyuridine (ho5U) to form 5-carboxymethoxyuridine (cmo5U) at position 34 in tRNAs. The chain is tRNA U34 carboxymethyltransferase from Escherichia coli (strain SE11).